Consider the following 389-residue polypeptide: S-adenosylmethionine synthase (389 aa).

His-15 serves as a coordination point for ATP. Mg(2+) is bound at residue Asp-17. Glu-43 contacts K(+). L-methionine-binding residues include Glu-56 and Gln-99. A flexible loop region spans residues 99 to 109 (QSPDIAQGVNE). Residues 166–168 (DAK), 234–235 (RF), Asp-243, 249–250 (RK), Ala-266, and Lys-270 each bind ATP. Position 243 (Asp-243) interacts with L-methionine. Position 274 (Lys-274) interacts with L-methionine.

It belongs to the AdoMet synthase family. Homotetramer; dimer of dimers. It depends on Mg(2+) as a cofactor. K(+) is required as a cofactor.

The protein localises to the cytoplasm. It catalyses the reaction L-methionine + ATP + H2O = S-adenosyl-L-methionine + phosphate + diphosphate. The protein operates within amino-acid biosynthesis; S-adenosyl-L-methionine biosynthesis; S-adenosyl-L-methionine from L-methionine: step 1/1. Its function is as follows. Catalyzes the formation of S-adenosylmethionine (AdoMet) from methionine and ATP. The overall synthetic reaction is composed of two sequential steps, AdoMet formation and the subsequent tripolyphosphate hydrolysis which occurs prior to release of AdoMet from the enzyme. The protein is S-adenosylmethionine synthase of Neisseria gonorrhoeae (strain NCCP11945).